Reading from the N-terminus, the 232-residue chain is MKKLENLLFDRFGLVFKDVSLLETAFTHTSYANEHRLLKISHNERLEFLGDAVLQLIISEYLFEKYPKRPEGDLTKLRSTIVREESLAGFSRDCQFDRFIKLGKGEEKSGGRERETILGDLFEAFLGALLLDKGLEVVKNFIYQVMIPKVEAGDFEQVTDYKTKLQELLQSNGDVEILYQVVSESGPAHAKNFEVSVSVDGRLVGKGQGRSKKLAEQEAAKNAFEKENHSCI.

The 130-residue stretch at 5 to 134 (ENLLFDRFGL…FLGALLLDKG (130 aa)) folds into the RNase III domain. Glu-47 contacts Mg(2+). Asp-51 is an active-site residue. Mg(2+) is bound by residues Asp-120 and Glu-123. Glu-123 is a catalytic residue. The region spanning 160-229 (DYKTKLQELL…AKNAFEKENH (70 aa)) is the DRBM domain.

It belongs to the ribonuclease III family. In terms of assembly, homodimer. Requires Mg(2+) as cofactor.

It is found in the cytoplasm. The catalysed reaction is Endonucleolytic cleavage to 5'-phosphomonoester.. Functionally, digests double-stranded RNA. Involved in the processing of primary rRNA transcript to yield the immediate precursors to the large and small rRNAs (23S and 16S). Processes some mRNAs, and tRNAs when they are encoded in the rRNA operon. Processes pre-crRNA and tracrRNA of type II CRISPR loci if present in the organism. The sequence is that of Ribonuclease 3 from Streptococcus gordonii (strain Challis / ATCC 35105 / BCRC 15272 / CH1 / DL1 / V288).